The primary structure comprises 473 residues: Arginine biosynthesis bifunctional protein ArgJ, mitochondrial (473 aa).

T201, K230, T241, E328, N468, and T473 together coordinate substrate. T241 serves as the catalytic Nucleophile.

It belongs to the ArgJ family. As to quaternary structure, heterodimer of an alpha and a beta chain. Post-translationally, the alpha and beta chains are autoproteolytically processed from a single precursor protein within the mitochondrion.

It localises to the mitochondrion matrix. It catalyses the reaction N(2)-acetyl-L-ornithine + L-glutamate = N-acetyl-L-glutamate + L-ornithine. It carries out the reaction L-glutamate + acetyl-CoA = N-acetyl-L-glutamate + CoA + H(+). Its pathway is amino-acid biosynthesis; L-arginine biosynthesis; L-ornithine and N-acetyl-L-glutamate from L-glutamate and N(2)-acetyl-L-ornithine (cyclic): step 1/1. The protein operates within amino-acid biosynthesis; L-arginine biosynthesis; N(2)-acetyl-L-ornithine from L-glutamate: step 1/4. Its function is as follows. Catalyzes two activities which are involved in the cyclic version of arginine biosynthesis: the synthesis of acetylglutamate from glutamate and acetyl-CoA, and of ornithine by transacetylation between acetylornithine and glutamate. The protein is Arginine biosynthesis bifunctional protein ArgJ, mitochondrial of Paracoccidioides lutzii (strain ATCC MYA-826 / Pb01) (Paracoccidioides brasiliensis).